Reading from the N-terminus, the 250-residue chain is Ubiquinone/menaquinone biosynthesis C-methyltransferase UbiE (250 aa).

S-adenosyl-L-methionine is bound by residues Thr-73, Asp-94, 122-123, and Ser-139; that span reads NA.

The protein belongs to the class I-like SAM-binding methyltransferase superfamily. MenG/UbiE family.

The enzyme catalyses a 2-demethylmenaquinol + S-adenosyl-L-methionine = a menaquinol + S-adenosyl-L-homocysteine + H(+). The catalysed reaction is a 2-methoxy-6-(all-trans-polyprenyl)benzene-1,4-diol + S-adenosyl-L-methionine = a 5-methoxy-2-methyl-3-(all-trans-polyprenyl)benzene-1,4-diol + S-adenosyl-L-homocysteine + H(+). The protein operates within quinol/quinone metabolism; menaquinone biosynthesis; menaquinol from 1,4-dihydroxy-2-naphthoate: step 2/2. It functions in the pathway cofactor biosynthesis; ubiquinone biosynthesis. In terms of biological role, methyltransferase required for the conversion of demethylmenaquinol (DMKH2) to menaquinol (MKH2) and the conversion of 2-polyprenyl-6-methoxy-1,4-benzoquinol (DDMQH2) to 2-polyprenyl-3-methyl-6-methoxy-1,4-benzoquinol (DMQH2). The protein is Ubiquinone/menaquinone biosynthesis C-methyltransferase UbiE of Francisella tularensis subsp. novicida (strain U112).